Reading from the N-terminus, the 183-residue chain is Large ribosomal subunit protein uL5 (183 aa).

This sequence belongs to the universal ribosomal protein uL5 family. In terms of assembly, part of the 50S ribosomal subunit; part of the 5S rRNA/L5/L18/L25 subcomplex. Contacts the 5S rRNA and the P site tRNA. Forms a bridge to the 30S subunit in the 70S ribosome.

This is one of the proteins that bind and probably mediate the attachment of the 5S RNA into the large ribosomal subunit, where it forms part of the central protuberance. In the 70S ribosome it contacts protein S13 of the 30S subunit (bridge B1b), connecting the 2 subunits; this bridge is implicated in subunit movement. Contacts the P site tRNA; the 5S rRNA and some of its associated proteins might help stabilize positioning of ribosome-bound tRNAs. The sequence is that of Large ribosomal subunit protein uL5 from Pseudothermotoga lettingae (strain ATCC BAA-301 / DSM 14385 / NBRC 107922 / TMO) (Thermotoga lettingae).